The primary structure comprises 345 residues: Uroporphyrinogen decarboxylase (345 aa).

Substrate is bound by residues 27–31, Phe46, Asp76, Tyr152, Ser207, and His320; that span reads RQAGR.

Belongs to the uroporphyrinogen decarboxylase family. As to quaternary structure, homodimer.

It localises to the cytoplasm. The enzyme catalyses uroporphyrinogen III + 4 H(+) = coproporphyrinogen III + 4 CO2. It participates in porphyrin-containing compound metabolism; protoporphyrin-IX biosynthesis; coproporphyrinogen-III from 5-aminolevulinate: step 4/4. Catalyzes the decarboxylation of four acetate groups of uroporphyrinogen-III to yield coproporphyrinogen-III. The polypeptide is Uroporphyrinogen decarboxylase (Geobacillus thermodenitrificans (strain NG80-2)).